The sequence spans 164 residues: Interferon gamma (164 aa).

The N-terminal stretch at 1–19 (MTCQTYNLFVLSVIMIYYG) is a signal peptide. N-linked (GlcNAc...) asparagine glycans are attached at residues Asn42 and Asn61.

The protein belongs to the type II (or gamma) interferon family. In terms of assembly, homodimer.

Its subcellular location is the secreted. In terms of biological role, produced by lymphocytes activated by specific antigens or mitogens. IFN-gamma, in addition to having antiviral activity, has important immunoregulatory functions. It is a potent activator of macrophages, it has antiproliferative effects on transformed cells and it can potentiate the antiviral and antitumor effects of the type I interferons. In Coturnix japonica (Japanese quail), this protein is Interferon gamma (IFNG).